Here is a 156-residue protein sequence, read N- to C-terminus: Small ribosomal subunit protein eS19A (156 aa).

This sequence belongs to the eukaryotic ribosomal protein eS19 family.

The sequence is that of Small ribosomal subunit protein eS19A (RpS19a) from Drosophila melanogaster (Fruit fly).